We begin with the raw amino-acid sequence, 98 residues long: NADH-ubiquinone oxidoreductase chain 4L (98 aa).

Transmembrane regions (helical) follow at residues methionine 1 to isoleucine 21, serine 28 to isoleucine 48, and leucine 61 to isoleucine 81.

This sequence belongs to the complex I subunit 4L family. As to quaternary structure, core subunit of respiratory chain NADH dehydrogenase (Complex I) which is composed of 45 different subunits.

The protein localises to the mitochondrion inner membrane. The catalysed reaction is a ubiquinone + NADH + 5 H(+)(in) = a ubiquinol + NAD(+) + 4 H(+)(out). Core subunit of the mitochondrial membrane respiratory chain NADH dehydrogenase (Complex I) which catalyzes electron transfer from NADH through the respiratory chain, using ubiquinone as an electron acceptor. Part of the enzyme membrane arm which is embedded in the lipid bilayer and involved in proton translocation. The sequence is that of NADH-ubiquinone oxidoreductase chain 4L (MT-ND4L) from Thylamys elegans (Elegant fat-tailed mouse opossum).